A 298-amino-acid polypeptide reads, in one-letter code: Putative F-box and FNIP repeat-containing protein R286 (298 aa).

The 45-residue stretch at 4–48 (LNVLESHVILHIIEFLPDHEKIKFMSTCKSLYEFRCHVTYNNFYV) folds into the F-box domain. 2 FNIP repeats span residues 124-165 (FNKP…LGHN) and 255-297 (WNFD…FISR).

This is Putative F-box and FNIP repeat-containing protein R286 from Acanthamoeba polyphaga (Amoeba).